Consider the following 225-residue polypeptide: 3-dehydroquinate dehydratase (225 aa).

3-dehydroquinate contacts are provided by residues 30–32 (EWR) and arginine 62. The active-site Proton donor/acceptor is histidine 118. Catalysis depends on lysine 143, which acts as the Schiff-base intermediate with substrate. Positions 186 and 209 each coordinate 3-dehydroquinate.

It belongs to the type-I 3-dehydroquinase family. Homodimer.

It catalyses the reaction 3-dehydroquinate = 3-dehydroshikimate + H2O. The protein operates within metabolic intermediate biosynthesis; chorismate biosynthesis; chorismate from D-erythrose 4-phosphate and phosphoenolpyruvate: step 3/7. Its function is as follows. Involved in the third step of the chorismate pathway, which leads to the biosynthesis of aromatic amino acids. Catalyzes the cis-dehydration of 3-dehydroquinate (DHQ) and introduces the first double bond of the aromatic ring to yield 3-dehydroshikimate. This is 3-dehydroquinate dehydratase from Streptococcus agalactiae serotype Ia (strain ATCC 27591 / A909 / CDC SS700).